The sequence spans 176 residues: Large ribosomal subunit protein uL22z (176 aa).

A compositionally biased stretch (basic and acidic residues) spans 154–163 (KEEPVKKEPE). A disordered region spans residues 154–176 (KEEPVKKEPETQLAAKSKKGASS).

The protein belongs to the universal ribosomal protein uL22 family.

The sequence is that of Large ribosomal subunit protein uL22z (RPL17A) from Arabidopsis thaliana (Mouse-ear cress).